We begin with the raw amino-acid sequence, 93 residues long: MSITREKKSELISEYCLKKGDTGSSFVQCAILSERIRNLTEHLKTHKKDFHCRRGLMVLVYRRRNGLQYIKKKYGDDQYLALIKRLGIRDIFH.

It belongs to the universal ribosomal protein uS15 family. In terms of assembly, part of the 30S ribosomal subunit. Forms a bridge to the 50S subunit in the 70S ribosome, contacting the 23S rRNA.

One of the primary rRNA binding proteins, it binds directly to 16S rRNA where it helps nucleate assembly of the platform of the 30S subunit by binding and bridging several RNA helices of the 16S rRNA. In terms of biological role, forms an intersubunit bridge (bridge B4) with the 23S rRNA of the 50S subunit in the ribosome. This Ehrlichia canis (strain Jake) protein is Small ribosomal subunit protein uS15.